Consider the following 287-residue polypeptide: Protein UL24 homolog (287 aa).

2 disordered regions span residues 1-33 and 254-287; these read MARRRKEVQRGESRSHRSRTRSKTAHHRKFSRR and RVGKESATKPASYSTSTEESKNLSEPCFDPDSNL. Residues 16-33 show a composition bias toward basic residues; it reads HRSRTRSKTAHHRKFSRR.

This sequence belongs to the herpesviridae UL24 family.

The protein resides in the virion. It is found in the host cytoplasm. The protein localises to the host nucleus. Its subcellular location is the host nucleolus. It localises to the host Golgi apparatus. May participate in nuclear egress of viral particles. Plays a role in the dispersal of several host nucleolar proteins including NCL/nucleolin and NPM1. Since deletion of host NCL/nucleolin negatively impact on nuclear egress, UL24 supposedly acts on this process through its effect on host nucleoli. The polypeptide is Protein UL24 homolog (Infectious laryngotracheitis virus (strain Thorne V882) (ILTV)).